The sequence spans 119 residues: Immunoglobulin heavy variable 2-26 (119 aa).

Positions 1-19 are cleaved as a signal peptide; sequence MDTLCYTLLLLTTPSWVLS. At Gln20 the chain carries Pyrrolidone carboxylic acid. Residues 20-44 are framework-1; that stretch reads QVTLKESGPVLVKPTETLTLTCTVS. Residues 20–119 enclose the Ig-like domain; the sequence is QVTLKESGPV…DTATYYCARI (100 aa). A disulfide bridge links Cys41 with Cys116. A complementarity-determining-1 region spans residues 45–54; that stretch reads GFSLSNARMG. Residues 55–71 form a framework-2 region; sequence VSWIRQPPGKALEWLAH. Positions 72–78 are complementarity-determining-2; that stretch reads IFSNDEK. Positions 79-116 are framework-3; the sequence is SYSTSLKSRLTISKDTSKSQVVLTMTNMDPVDTATYYC. Residues 117–119 form a complementarity-determining-3 region; that stretch reads ARI.

Immunoglobulins are composed of two identical heavy chains and two identical light chains; disulfide-linked.

The protein localises to the secreted. It localises to the cell membrane. Its function is as follows. V region of the variable domain of immunoglobulin heavy chains that participates in the antigen recognition. Immunoglobulins, also known as antibodies, are membrane-bound or secreted glycoproteins produced by B lymphocytes. In the recognition phase of humoral immunity, the membrane-bound immunoglobulins serve as receptors which, upon binding of a specific antigen, trigger the clonal expansion and differentiation of B lymphocytes into immunoglobulins-secreting plasma cells. Secreted immunoglobulins mediate the effector phase of humoral immunity, which results in the elimination of bound antigens. The antigen binding site is formed by the variable domain of one heavy chain, together with that of its associated light chain. Thus, each immunoglobulin has two antigen binding sites with remarkable affinity for a particular antigen. The variable domains are assembled by a process called V-(D)-J rearrangement and can then be subjected to somatic hypermutations which, after exposure to antigen and selection, allow affinity maturation for a particular antigen. The sequence is that of Immunoglobulin heavy variable 2-26 from Homo sapiens (Human).